The sequence spans 191 residues: Ion-translocating oxidoreductase complex subunit B (191 aa).

Residues methionine 1–serine 26 are hydrophobic. Residues glutamate 32 to valine 91 enclose the 4Fe-4S domain. The [4Fe-4S] cluster site is built by cysteine 49, cysteine 52, cysteine 57, cysteine 74, cysteine 116, cysteine 119, cysteine 122, cysteine 126, cysteine 146, cysteine 149, cysteine 152, and cysteine 156. 4Fe-4S ferredoxin-type domains are found at residues lysine 107 to arginine 136 and alanine 137 to valine 166.

Belongs to the 4Fe4S bacterial-type ferredoxin family. RnfB subfamily. In terms of assembly, the complex is composed of six subunits: RnfA, RnfB, RnfC, RnfD, RnfE and RnfG. The cofactor is [4Fe-4S] cluster.

It localises to the cell inner membrane. In terms of biological role, part of a membrane-bound complex that couples electron transfer with translocation of ions across the membrane. This chain is Ion-translocating oxidoreductase complex subunit B, found in Erwinia tasmaniensis (strain DSM 17950 / CFBP 7177 / CIP 109463 / NCPPB 4357 / Et1/99).